Reading from the N-terminus, the 453-residue chain is Cysteine--tRNA ligase (453 aa).

Position 30 (Cys-30) interacts with Zn(2+). The 'HIGH' region signature appears at 32-42 (PTVYDRAHLGN). Residues Cys-212, His-237, and Glu-241 each contribute to the Zn(2+) site. The short motif at 268 to 272 (KMSKS) is the 'KMSKS' region element. Lys-271 lines the ATP pocket.

Belongs to the class-I aminoacyl-tRNA synthetase family. As to quaternary structure, monomer. Zn(2+) serves as cofactor.

The protein resides in the cytoplasm. The enzyme catalyses tRNA(Cys) + L-cysteine + ATP = L-cysteinyl-tRNA(Cys) + AMP + diphosphate. This chain is Cysteine--tRNA ligase, found in Jannaschia sp. (strain CCS1).